Consider the following 528-residue polypeptide: Glucose-6-phosphate isomerase (528 aa).

Glu322 (proton donor) is an active-site residue. Catalysis depends on residues His351 and Lys455.

It belongs to the GPI family.

Its subcellular location is the cytoplasm. It carries out the reaction alpha-D-glucose 6-phosphate = beta-D-fructose 6-phosphate. The protein operates within carbohydrate biosynthesis; gluconeogenesis. It functions in the pathway carbohydrate degradation; glycolysis; D-glyceraldehyde 3-phosphate and glycerone phosphate from D-glucose: step 2/4. In terms of biological role, catalyzes the reversible isomerization of glucose-6-phosphate to fructose-6-phosphate. The protein is Glucose-6-phosphate isomerase of Nostoc punctiforme (strain ATCC 29133 / PCC 73102).